The primary structure comprises 491 residues: Glutamate--tRNA ligase (491 aa).

The 'HIGH' region motif lies at 13–23 (PSPTGFLHIGN). Zn(2+)-binding residues include Cys110, Cys112, Cys137, and His139. Positions 254–258 (KLSKR) match the 'KMSKS' region motif. Lys257 is an ATP binding site.

This sequence belongs to the class-I aminoacyl-tRNA synthetase family. Glutamate--tRNA ligase type 1 subfamily. In terms of assembly, monomer. The cofactor is Zn(2+).

It is found in the cytoplasm. The enzyme catalyses tRNA(Glu) + L-glutamate + ATP = L-glutamyl-tRNA(Glu) + AMP + diphosphate. In terms of biological role, catalyzes the attachment of glutamate to tRNA(Glu) in a two-step reaction: glutamate is first activated by ATP to form Glu-AMP and then transferred to the acceptor end of tRNA(Glu). The polypeptide is Glutamate--tRNA ligase (Listeria innocua serovar 6a (strain ATCC BAA-680 / CLIP 11262)).